We begin with the raw amino-acid sequence, 280 residues long: Lacto-N-neotetraose biosynthesis glycosyltransferase LgtE (280 aa).

This sequence belongs to the glycosyltransferase 25 family.

The protein operates within glycan metabolism; lacto-N-neotetraose biosynthesis. Its pathway is bacterial outer membrane biogenesis; lipooligosaccharide biosynthesis. In terms of biological role, adds the first galactose to the lacto-N-tetraose chain in lipooligosaccharide (LOS). In Neisseria gonorrhoeae, this protein is Lacto-N-neotetraose biosynthesis glycosyltransferase LgtE (lgtE).